We begin with the raw amino-acid sequence, 335 residues long: Holliday junction branch migration complex subunit RuvB (335 aa).

The large ATPase domain (RuvB-L) stretch occupies residues 1–181 (MDRIVEIEKY…FGMQFRLEFY (181 aa)). An ATP-binding site is contributed by Leu-20. Residues Arg-21, Tyr-28, Ile-29, Gly-62, Leu-63, Gly-64, Lys-65, Thr-66, and Thr-67 each contribute to the ADP site. ATP-binding positions include 128–130 (EDY) and Arg-171. ADP is bound by residues Tyr-181 and Arg-218. Positions 182-252 (KDSELALILQ…RANEALNSLG (71 aa)) are small ATPAse domain (RuvB-S). The segment at 255–335 (ELGFDAMDLR…LNYEKTLFEE (81 aa)) is head domain (RuvB-H). Residues Arg-309 and Arg-314 each coordinate DNA.

It belongs to the RuvB family. As to quaternary structure, homohexamer. Forms an RuvA(8)-RuvB(12)-Holliday junction (HJ) complex. HJ DNA is sandwiched between 2 RuvA tetramers; dsDNA enters through RuvA and exits via RuvB. An RuvB hexamer assembles on each DNA strand where it exits the tetramer. Each RuvB hexamer is contacted by two RuvA subunits (via domain III) on 2 adjacent RuvB subunits; this complex drives branch migration. In the full resolvosome a probable DNA-RuvA(4)-RuvB(12)-RuvC(2) complex forms which resolves the HJ.

It localises to the cytoplasm. The catalysed reaction is ATP + H2O = ADP + phosphate + H(+). Its function is as follows. The RuvA-RuvB-RuvC complex processes Holliday junction (HJ) DNA during genetic recombination and DNA repair, while the RuvA-RuvB complex plays an important role in the rescue of blocked DNA replication forks via replication fork reversal (RFR). RuvA specifically binds to HJ cruciform DNA, conferring on it an open structure. The RuvB hexamer acts as an ATP-dependent pump, pulling dsDNA into and through the RuvAB complex. RuvB forms 2 homohexamers on either side of HJ DNA bound by 1 or 2 RuvA tetramers; 4 subunits per hexamer contact DNA at a time. Coordinated motions by a converter formed by DNA-disengaged RuvB subunits stimulates ATP hydrolysis and nucleotide exchange. Immobilization of the converter enables RuvB to convert the ATP-contained energy into a lever motion, pulling 2 nucleotides of DNA out of the RuvA tetramer per ATP hydrolyzed, thus driving DNA branch migration. The RuvB motors rotate together with the DNA substrate, which together with the progressing nucleotide cycle form the mechanistic basis for DNA recombination by continuous HJ branch migration. Branch migration allows RuvC to scan DNA until it finds its consensus sequence, where it cleaves and resolves cruciform DNA. The protein is Holliday junction branch migration complex subunit RuvB of Campylobacter jejuni subsp. jejuni serotype O:2 (strain ATCC 700819 / NCTC 11168).